Reading from the N-terminus, the 448-residue chain is Metacaspase-1 (448 aa).

Positions 1 to 129 are disordered; it reads MFPGQGRHTY…GHYSRPPTDS (129 aa). Residues 10–44 are compositionally biased toward low complexity; the sequence is YGGQQSNYSNQQQGYDQGYNQGYGQAYGQEYNQGY. Residues 61 to 70 are compositionally biased toward pro residues; it reads SGPPPGPPPG. Residues 99–114 show a composition bias toward polar residues; the sequence is YGNNQTRGSGNEQNYG. Catalysis depends on residues histidine 231 and cysteine 292.

This sequence belongs to the peptidase C14B family.

Its function is as follows. Involved in cell death (apoptosis). The polypeptide is Metacaspase-1 (MCA1) (Candida albicans (strain SC5314 / ATCC MYA-2876) (Yeast)).